Reading from the N-terminus, the 379-residue chain is Glutamate 5-kinase (379 aa).

Position 15 (K15) interacts with ATP. Residues S56, D143, and N155 each coordinate substrate. 175–176 (SD) serves as a coordination point for ATP. In terms of domain architecture, PUA spans 281–358 (RGTLAIDAGA…SDAAQLLGVR (78 aa)).

The protein belongs to the glutamate 5-kinase family.

Its subcellular location is the cytoplasm. It carries out the reaction L-glutamate + ATP = L-glutamyl 5-phosphate + ADP. The protein operates within amino-acid biosynthesis; L-proline biosynthesis; L-glutamate 5-semialdehyde from L-glutamate: step 1/2. In terms of biological role, catalyzes the transfer of a phosphate group to glutamate to form L-glutamate 5-phosphate. The polypeptide is Glutamate 5-kinase (Nitrobacter winogradskyi (strain ATCC 25391 / DSM 10237 / CIP 104748 / NCIMB 11846 / Nb-255)).